A 235-amino-acid chain; its full sequence is MDVYEGKAKKIIPLDDGKVIMEFKDDATAFNGEKKAQFRGKGWLNAQISAHLFRVLEASGIKTHFIGVAGDNRLIVERLKMYPLEVVVRNVVAGSLKKRLPLEEGTELPEPIIEFYYKNDDLGDPMINQYHARVLGVGESELKEMEKIALQVNDVLRKYFAERGIILVDFKLEFGKNTRGEIVLGDEISPDTCRFWDAETKESLDKDVFRFGKGDLISAYERLYERITGEAPVRR.

It belongs to the SAICAR synthetase family.

The enzyme catalyses 5-amino-1-(5-phospho-D-ribosyl)imidazole-4-carboxylate + L-aspartate + ATP = (2S)-2-[5-amino-1-(5-phospho-beta-D-ribosyl)imidazole-4-carboxamido]succinate + ADP + phosphate + 2 H(+). Its pathway is purine metabolism; IMP biosynthesis via de novo pathway; 5-amino-1-(5-phospho-D-ribosyl)imidazole-4-carboxamide from 5-amino-1-(5-phospho-D-ribosyl)imidazole-4-carboxylate: step 1/2. This is Phosphoribosylaminoimidazole-succinocarboxamide synthase from Thermococcus kodakarensis (strain ATCC BAA-918 / JCM 12380 / KOD1) (Pyrococcus kodakaraensis (strain KOD1)).